Consider the following 101-residue polypeptide: Protein Tat (101 aa).

Residues 1 to 20 (MEPVDPSLEPWKHPGSQPKT) are disordered. An interaction with human CREBBP region spans residues 1–24 (MEPVDPSLEPWKHPGSQPKTACTN). Residues 1 to 48 (MEPVDPSLEPWKHPGSQPKTACTNCYCKKCCLHCQVCFTTKGLGISYG) are transactivation. Residues Cys22, Cys25, and Cys27 each contribute to the Zn(2+) site. A cysteine-rich region spans residues 22-37 (CTNCYCKKCCLHCQVC). Lys28 carries the N6-acetyllysine; by host PCAF modification. The Zn(2+) site is built by Cys30, His33, Cys34, and Cys37. Positions 38-48 (FTTKGLGISYG) are core. A disordered region spans residues 45-101 (ISYGRKKRRQRRRPPQDSQTHQVSLPKQPSSQQRGDPTGPKESKKKVERETETDPDN). Basic residues predominate over residues 48 to 57 (GRKKRRQRRR). The Nuclear localization signal, RNA-binding (TAR), and protein transduction motif lies at 49-57 (RKKRRQRRR). An interaction with the host capping enzyme RNGTT region spans residues 49 to 86 (RKKRRQRRRPPQDSQTHQVSLPKQPSSQQRGDPTGPKE). N6-acetyllysine; by host EP300 and GCN5L2 occurs at positions 50 and 51. Arg52 and Arg53 each carry asymmetric dimethylarginine; by host PRMT6. A compositionally biased stretch (polar residues) spans 61–79 (DSQTHQVSLPKQPSSQQRG). Lys71 participates in a covalent cross-link: Glycyl lysine isopeptide (Lys-Gly) (interchain with G-Cter in ubiquitin). The Cell attachment site motif lies at 78 to 80 (RGD). The span at 83 to 101 (GPKESKKKVERETETDPDN) shows a compositional bias: basic and acidic residues.

This sequence belongs to the lentiviruses Tat family. Interacts with host CCNT1. Associates with the P-TEFb complex composed at least of Tat, P-TEFb (CDK9 and CCNT1), TAR RNA, RNA Pol II. Recruits the HATs CREBBP, TAF1/TFIID, EP300, PCAF and GCN5L2. Interacts with host KAT5/Tip60; this interaction targets the latter to degradation. Interacts with the host deacetylase SIRT1. Interacts with host capping enzyme RNGTT; this interaction stimulates RNGTT. Binds to host KDR, and to the host integrins ITGAV/ITGB3 and ITGA5/ITGB1. Interacts with host KPNB1/importin beta-1 without previous binding to KPNA1/importin alpha-1. Interacts with EIF2AK2. Interacts with host nucleosome assembly protein NAP1L1; this interaction may be required for the transport of Tat within the nucleus, since the two proteins interact at the nuclear rim. Interacts with host C1QBP/SF2P32; this interaction involves lysine-acetylated Tat. Interacts with the host chemokine receptors CCR2, CCR3 and CXCR4. Interacts with host DPP4/CD26; this interaction may trigger an anti-proliferative effect. Interacts with host LDLR. Interacts with the host extracellular matrix metalloproteinase MMP1. Interacts with host PRMT6; this interaction mediates Tat's methylation. Interacts with, and is ubiquitinated by MDM2/Hdm2. Interacts with host PSMC3 and HTATIP2. Interacts with STAB1; this interaction may overcome SATB1-mediated repression of IL2 and IL2RA (interleukin) in T cells by binding to the same domain than HDAC1. Interacts (when acetylated) with human CDK13, thereby increasing HIV-1 mRNA splicing and promoting the production of the doubly spliced HIV-1 protein Nef. Interacts with host TBP; this interaction modulates the activity of transcriptional pre-initiation complex. Interacts with host RELA. Interacts with host PLSCR1; this interaction negatively regulates Tat transactivation activity by altering its subcellular distribution. In terms of processing, asymmetrical arginine methylation by host PRMT6 seems to diminish the transactivation capacity of Tat and affects the interaction with host CCNT1. Acetylation by EP300, CREBBP, GCN5L2/GCN5 and PCAF regulates the transactivation activity of Tat. EP300-mediated acetylation of Lys-50 promotes dissociation of Tat from the TAR RNA through the competitive binding to PCAF's bromodomain. In addition, the non-acetylated Tat's N-terminus can also interact with PCAF. PCAF-mediated acetylation of Lys-28 enhances Tat's binding to CCNT1. Lys-50 is deacetylated by SIRT1. Post-translationally, polyubiquitination by host MDM2 does not target Tat to degradation, but activates its transactivation function and fosters interaction with CCNT1 and TAR RNA. In terms of processing, phosphorylated by EIF2AK2 on serine and threonine residues adjacent to the basic region important for TAR RNA binding and function. Phosphorylation of Tat by EIF2AK2 is dependent on the prior activation of EIF2AK2 by dsRNA.

The protein resides in the host nucleus. Its subcellular location is the host nucleolus. It is found in the host cytoplasm. The protein localises to the secreted. In terms of biological role, transcriptional activator that increases RNA Pol II processivity, thereby increasing the level of full-length viral transcripts. Recognizes a hairpin structure at the 5'-LTR of the nascent viral mRNAs referred to as the transactivation responsive RNA element (TAR) and recruits the cyclin T1-CDK9 complex (P-TEFb complex) that will in turn hyperphosphorylate the RNA polymerase II to allow efficient elongation. The CDK9 component of P-TEFb and other Tat-activated kinases hyperphosphorylate the C-terminus of RNA Pol II that becomes stabilized and much more processive. Other factors such as HTATSF1/Tat-SF1, SUPT5H/SPT5, and HTATIP2 are also important for Tat's function. Besides its effect on RNA Pol II processivity, Tat induces chromatin remodeling of proviral genes by recruiting the histone acetyltransferases (HATs) CREBBP, EP300 and PCAF to the chromatin. This also contributes to the increase in proviral transcription rate, especially when the provirus integrates in transcriptionally silent region of the host genome. To ensure maximal activation of the LTR, Tat mediates nuclear translocation of NF-kappa-B by interacting with host RELA. Through its interaction with host TBP, Tat may also modulate transcription initiation. Tat can reactivate a latently infected cell by penetrating in it and transactivating its LTR promoter. In the cytoplasm, Tat is thought to act as a translational activator of HIV-1 mRNAs. Functionally, extracellular circulating Tat can be endocytosed by surrounding uninfected cells via the binding to several surface receptors such as CD26, CXCR4, heparan sulfate proteoglycans (HSPG) or LDLR. Neurons are rarely infected, but they internalize Tat via their LDLR. Through its interaction with nuclear HATs, Tat is potentially able to control the acetylation-dependent cellular gene expression. Modulates the expression of many cellular genes involved in cell survival, proliferation or in coding for cytokines or cytokine receptors. Tat plays a role in T-cell and neurons apoptosis. Tat induced neurotoxicity and apoptosis probably contribute to neuroAIDS. Circulating Tat also acts as a chemokine-like and/or growth factor-like molecule that binds to specific receptors on the surface of the cells, affecting many cellular pathways. In the vascular system, Tat binds to ITGAV/ITGB3 and ITGA5/ITGB1 integrins dimers at the surface of endothelial cells and competes with bFGF for heparin-binding sites, leading to an excess of soluble bFGF. In Homo sapiens (Human), this protein is Protein Tat.